Here is a 678-residue protein sequence, read N- to C-terminus: Inositol-trisphosphate 3-kinase C (678 aa).

Disordered stretches follow at residues 26–128 (LEAL…RRNS) and 151–300 (DLQS…LDLS). Residues 44 to 58 (PGAGGPTGRPEGGGP) show a composition bias toward gly residues. Basic and acidic residues-rich tracts occupy residues 61-76 (WIEESSLHSEAERTDL) and 107-116 (EKPRQNKELD). Serine 160 carries the phosphoserine modification. Basic and acidic residues-rich tracts occupy residues 173–196 (ELDRSDMWQTLPERDNKPRVDNLR) and 220–236 (SGKELSADASRTPHDTD). Positions 318–326 (LCPVPRLII) match the Nuclear export signal motif. The segment at 328-380 (PETPEPEAQPVGPQSRIEGGTGGFSSASSFDESEDDLVAGGGGTSDPEDRAGS) is disordered. Threonine 330 bears the Phosphothreonine mark. Serine 398 carries the post-translational modification Phosphoserine. ATP-binding positions include lysine 426, 466 to 468 (EDL), and aspartate 479. Substrate is bound by residues lysine 481, 502 to 508 (RKDMYEK), and 529 to 536 (KPRYMQWR). Residues 504–512 (DMYEKMVAV) form a calmodulin-binding region. The ATP site is built by lysine 553 and aspartate 633. Lysine 636 contacts substrate.

The protein belongs to the inositol phosphokinase (IPK) family.

Its subcellular location is the nucleus. The protein resides in the cytoplasm. It catalyses the reaction 1D-myo-inositol 1,4,5-trisphosphate + ATP = 1D-myo-inositol 1,3,4,5-tetrakisphosphate + ADP + H(+). Its activity is regulated as follows. Activated by calcium/calmodulin. Inhibited by high concentrations of the substrate Ins(1,2,4)P3, and allosterically activated by the product Ins(1,3,4,5)P4. Catalyzes the phosphorylation of 1D-myo-inositol 1,4,5-trisphosphate (InsP3) into 1D-myo-inositol 1,3,4,5-tetrakisphosphate and participates to the regulation of calcium homeostasis. Can phosphorylate inositol 2,4,5-triphosphate to inositol 2,4,5,6-tetraphosphate. The chain is Inositol-trisphosphate 3-kinase C (Itpkc) from Mus musculus (Mouse).